A 249-amino-acid chain; its full sequence is ATP synthase subunit a, chloroplastic (249 aa).

5 consecutive transmembrane segments (helical) span residues 40-60 (QVLITSWVVIAILLGSAVLAV), 97-117 (VPFIGTLFLFIFVSNWSGALL), 136-156 (INTTVALALLTSVAYFYAGLS), 201-221 (LVVVVLVSLVPLVVPIPVMFL), and 222-242 (GLFTSGIQALIFATLAAAYIG).

It belongs to the ATPase A chain family. F-type ATPases have 2 components, CF(1) - the catalytic core - and CF(0) - the membrane proton channel. CF(1) has five subunits: alpha(3), beta(3), gamma(1), delta(1), epsilon(1). CF(0) has four main subunits: a, b, b' and c.

The protein resides in the plastid. It is found in the chloroplast thylakoid membrane. In terms of biological role, key component of the proton channel; it plays a direct role in the translocation of protons across the membrane. This Draba nemorosa (Woodland whitlowgrass) protein is ATP synthase subunit a, chloroplastic.